We begin with the raw amino-acid sequence, 87 residues long: UPF0147 protein AF_2370.1 (87 aa).

It belongs to the UPF0147 family.

This Archaeoglobus fulgidus (strain ATCC 49558 / DSM 4304 / JCM 9628 / NBRC 100126 / VC-16) protein is UPF0147 protein AF_2370.1.